Consider the following 56-residue polypeptide: GSICLEPKVVGPCTAYFPRFYFDSETGKCTPFIYGGCEGNSYVDEKLHACRAICRA.

Residues 4 to 54 (CLEPKVVGPCTAYFPRFYFDSETGKCTPFIYGGCEGNSYVDEKLHACRAIC) form the BPTI/Kunitz inhibitor domain. 3 cysteine pairs are disulfide-bonded: Cys-4–Cys-54, Cys-13–Cys-37, and Cys-29–Cys-50.

It belongs to the venom Kunitz-type family. Sea anemone type 2 potassium channel toxin subfamily.

It is found in the secreted. It localises to the nematocyst. Its function is as follows. Serine protease inhibitor that acts on trypsin. This Radianthus crispa (Leathery sea anemone) protein is PI-stichotoxin-Hcr2a.